The primary structure comprises 548 residues: Membrane protein insertase YidC (548 aa).

Residues 6–26 form a helical membrane-spanning segment; sequence NLLVIALLFVSFMIWQAWEQD. Residues 28–54 form a disordered region; the sequence is NPQPQTQQTTQTTTTAAGSAADQGVPA. Residues 29–42 show a composition bias toward low complexity; the sequence is PQPQTQQTTQTTTT. 4 helical membrane passes run 350–370, 424–444, 458–478, and 499–519; these read FVGN…GIMY, FPLI…MGSI, LSAQ…MFFI, and PVIF…YYIV.

Belongs to the OXA1/ALB3/YidC family. Type 1 subfamily. In terms of assembly, interacts with the Sec translocase complex via SecD. Specifically interacts with transmembrane segments of nascent integral membrane proteins during membrane integration.

The protein resides in the cell inner membrane. Its function is as follows. Required for the insertion and/or proper folding and/or complex formation of integral membrane proteins into the membrane. Involved in integration of membrane proteins that insert both dependently and independently of the Sec translocase complex, as well as at least some lipoproteins. Aids folding of multispanning membrane proteins. The chain is Membrane protein insertase YidC from Salmonella arizonae (strain ATCC BAA-731 / CDC346-86 / RSK2980).